The following is a 177-amino-acid chain: Large ribosomal subunit protein uL6 (177 aa).

Belongs to the universal ribosomal protein uL6 family. As to quaternary structure, part of the 50S ribosomal subunit.

Functionally, this protein binds to the 23S rRNA, and is important in its secondary structure. It is located near the subunit interface in the base of the L7/L12 stalk, and near the tRNA binding site of the peptidyltransferase center. The polypeptide is Large ribosomal subunit protein uL6 (Ectopseudomonas mendocina (strain ymp) (Pseudomonas mendocina)).